The sequence spans 409 residues: uncharacterized protein (409 aa).

A signal peptide spans 1–29 (MARSRCVHRVVHQAACIGVIGLSTSALTT). Cysteine 30 carries N-palmitoyl cysteine lipidation. Cysteine 30 is lipidated: S-diacylglycerol cysteine.

This sequence belongs to the TP013X lipoprotein family.

It localises to the cell membrane. This is an uncharacterized protein from Treponema pallidum (strain Nichols).